We begin with the raw amino-acid sequence, 991 residues long: Envelope glycoprotein gp160 (991 aa).

The signal sequence occupies residues 1–106 (MTSKESKPSR…CLMWEMRKGN (106 aa)). Residues 107–840 (QCQAEEVIAL…WSSWFSWLKY (734 aa)) lie on the Extracellular side of the membrane. Residues asparagine 140, asparagine 161, asparagine 206, asparagine 258, asparagine 298, asparagine 364, asparagine 381, asparagine 387, asparagine 403, asparagine 435, asparagine 439, asparagine 470, asparagine 475, asparagine 481, asparagine 491, asparagine 501, asparagine 515, asparagine 527, asparagine 537, asparagine 542, asparagine 543, and asparagine 568 are each glycosylated (N-linked (GlcNAc...) asparagine; by host). Positions 665-685 (GIGLVIVLAIMAIIAAAGAGL) are fusion peptide. Positions 697–747 (RTAVQSLANATAAQQEVLEASYAMVQHIAKGIRILEARVARVEALVDRMMV) form a coiled coil. A glycan (N-linked (GlcNAc...) asparagine; by host) is linked at asparagine 705. The segment at 731–747 (LEARVARVEALVDRMMV) is immunosuppression. Asparagine 773, asparagine 780, asparagine 796, and asparagine 830 each carry an N-linked (GlcNAc...) asparagine; by host glycan. Residues 788 to 823 (EEIEQHEGNLSLLLREAALQVHIAQRDARRIPDAWK) adopt a coiled-coil conformation. Residues 841 to 861 (VPWIIMGIVGLICFRILMCVI) form a helical membrane-spanning segment. Residues 862-991 (SMCLQAYKQV…PTLENDYVEL (130 aa)) are Cytoplasmic-facing. A lipid anchor (S-palmitoyl cysteine; by host) is attached at cysteine 864.

The mature envelope protein (Env) consists of a trimer of SU-TM heterodimers attached by noncovalent interactions or by a labile interchain disulfide bond. In terms of processing, specific enzymatic cleavages in vivo yield mature proteins. Envelope glycoproteins are synthesized as an inactive precursor that is N-glycosylated and processed likely by host cell furin or by a furin-like protease in the Golgi to yield the mature SU and TM proteins. The cleavage site between SU and TM requires the minimal sequence [KR]-X-[KR]-R. The transmembrane protein is palmitoylated.

Its subcellular location is the virion membrane. It localises to the host cell membrane. Functionally, the surface protein (SU) attaches the virus to the host cell by binding to its receptor. This interaction triggers the refolding of the transmembrane protein (TM) and is thought to activate its fusogenic potential by unmasking its fusion peptide. Fusion occurs at the host cell plasma membrane. Its function is as follows. The transmembrane protein (TM) acts as a class I viral fusion protein. Under the current model, the protein has at least 3 conformational states: pre-fusion native state, pre-hairpin intermediate state, and post-fusion hairpin state. During viral and target cell membrane fusion, the coiled coil regions (heptad repeats) assume a trimer-of-hairpins structure, positioning the fusion peptide in close proximity to the C-terminal region of the ectodomain. The formation of this structure appears to drive apposition and subsequent fusion of viral and target cell membranes. Membranes fusion leads to delivery of the nucleocapsid into the cytoplasm. The sequence is that of Envelope glycoprotein gp160 (env) from Ovis aries (Sheep).